The chain runs to 459 residues: tRNA modification GTPase MnmE (459 aa).

The (6S)-5-formyl-5,6,7,8-tetrahydrofolate site is built by R22, E85, and R124. Positions 221–380 constitute a TrmE-type G domain; the sequence is GLSTVIVGKP…LEIQIRDLFF (160 aa). N231 is a binding site for K(+). GTP is bound by residues 231 to 236, 250 to 256, and 275 to 278; these read NVGKSS, TEVAGTT, and DTAG. S235 provides a ligand contact to Mg(2+). Residues T250, V252, and T255 each coordinate K(+). T256 serves as a coordination point for Mg(2+). K459 contributes to the (6S)-5-formyl-5,6,7,8-tetrahydrofolate binding site.

This sequence belongs to the TRAFAC class TrmE-Era-EngA-EngB-Septin-like GTPase superfamily. TrmE GTPase family. As to quaternary structure, homodimer. Heterotetramer of two MnmE and two MnmG subunits. K(+) serves as cofactor.

It localises to the cytoplasm. In terms of biological role, exhibits a very high intrinsic GTPase hydrolysis rate. Involved in the addition of a carboxymethylaminomethyl (cmnm) group at the wobble position (U34) of certain tRNAs, forming tRNA-cmnm(5)s(2)U34. The sequence is that of tRNA modification GTPase MnmE from Staphylococcus aureus (strain Mu3 / ATCC 700698).